The following is a 175-amino-acid chain: Transcription factor E (175 aa).

Residues 3–88 (DNPLIQQVLF…TWKPSLEKLP (86 aa)) enclose the HTH TFE/IIEalpha-type domain.

This sequence belongs to the TFE family. As to quaternary structure, monomer. Interaction with RNA polymerase subunits RpoF and RpoE is necessary for Tfe stimulatory transcription activity. Able to interact with Tbp and RNA polymerase in the absence of DNA promoter. Interacts both with the preinitiation and elongation complexes.

Functionally, transcription factor that plays a role in the activation of archaeal genes transcribed by RNA polymerase. Facilitates transcription initiation by enhancing TATA-box recognition by TATA-box-binding protein (Tbp), and transcription factor B (Tfb) and RNA polymerase recruitment. Not absolutely required for transcription in vitro, but particularly important in cases where Tbp or Tfb function is not optimal. It dynamically alters the nucleic acid-binding properties of RNA polymerases by stabilizing the initiation complex and destabilizing elongation complexes. Seems to translocate with the RNA polymerase following initiation and acts by binding to the non template strand of the transcription bubble in elongation complexes. This is Transcription factor E from Methanococcus vannielii (strain ATCC 35089 / DSM 1224 / JCM 13029 / OCM 148 / SB).